We begin with the raw amino-acid sequence, 223 residues long: Receptor-transporting protein 2 (223 aa).

At 1–193 the chain is on the cytoplasmic side; that stretch reads MSTSLTTCEW…KKGQAGFISS (193 aa). The segment at 52 to 161 adopts a 3CxxC-type zinc-finger fold; that stretch reads ASGRFHCSWC…SEFCEACQEG (110 aa). Residues 194-216 traverse the membrane as a helical segment; the sequence is FFSFRWCLFWGTLCLVIVYLQFF. The Extracellular segment spans residues 217–223; the sequence is RGRSGFL.

Belongs to the TMEM7 family. In terms of assembly, interacts with olfactory receptors. As to expression, predominantly expressed in olfactory and vomeronasal organs, in mature olfactory sensory neurons.

The protein localises to the cell membrane. Specifically promotes functional cell surface expression of olfactory receptors, but not of other GPCRs. This Mus musculus (Mouse) protein is Receptor-transporting protein 2 (Rtp2).